Consider the following 229-residue polypeptide: Putative ankyrin repeat protein L148 (229 aa).

4 ANK repeats span residues 70–95, 96–126, 127–156, and 157–186; these read ILDY…PDNY, IGTE…DLRI, NNDY…NCQA, and YNNA…SVAA.

In Acanthamoeba polyphaga (Amoeba), this protein is Putative ankyrin repeat protein L148.